Reading from the N-terminus, the 115-residue chain is NAD(P)H-quinone oxidoreductase subunit M (115 aa).

This sequence belongs to the complex I NdhM subunit family. NDH-1 can be composed of about 15 different subunits; different subcomplexes with different compositions have been identified which probably have different functions.

It localises to the cellular thylakoid membrane. The enzyme catalyses a plastoquinone + NADH + (n+1) H(+)(in) = a plastoquinol + NAD(+) + n H(+)(out). The catalysed reaction is a plastoquinone + NADPH + (n+1) H(+)(in) = a plastoquinol + NADP(+) + n H(+)(out). NDH-1 shuttles electrons from an unknown electron donor, via FMN and iron-sulfur (Fe-S) centers, to quinones in the respiratory and/or the photosynthetic chain. The immediate electron acceptor for the enzyme in this species is believed to be plastoquinone. Couples the redox reaction to proton translocation, and thus conserves the redox energy in a proton gradient. Cyanobacterial NDH-1 also plays a role in inorganic carbon-concentration. The chain is NAD(P)H-quinone oxidoreductase subunit M from Prochlorococcus marinus (strain SARG / CCMP1375 / SS120).